The chain runs to 251 residues: MILYEYPFNERIRTLLRLEDLFERFTFFLTQEDAREHHVALTTLFEIAEVAGRADLKSDLMKELERQRQTLAPFRGNPGIEQNALEAVLGEMEQTLAGLTQMQGKTGQHLADNEWLASIRSRAIIPGGTCKFDLPSYYAWQQTHPDQRRQDIAKWIMPLLPLRDAAAIVLRLARESGQASKVMAMQGSYQQMLSGRTYQLMQVRVAPELRVIPEASANKYMLWVRFTVQDGDLRPRAVDVDVPFQLTLCSL.

It belongs to the ZapD family. In terms of assembly, interacts with FtsZ.

Its subcellular location is the cytoplasm. Its function is as follows. Cell division factor that enhances FtsZ-ring assembly. Directly interacts with FtsZ and promotes bundling of FtsZ protofilaments, with a reduction in FtsZ GTPase activity. This chain is Cell division protein ZapD, found in Paraburkholderia phymatum (strain DSM 17167 / CIP 108236 / LMG 21445 / STM815) (Burkholderia phymatum).